The following is a 473-amino-acid chain: Photosystem II CP43 reaction center protein (473 aa).

Residues 1–14 (MKTLYSLRRFYPVE) constitute a propeptide that is removed on maturation. N-acetylthreonine is present on Thr15. Thr15 is subject to Phosphothreonine. 5 consecutive transmembrane segments (helical) span residues 69-93 (LFEV…PHLA), 134-155 (LLGP…KDRN), 178-200 (KALY…RKIT), 255-275 (KPFA…LSYS), and 291-312 (WFNN…ASQA). A [CaMn4O5] cluster-binding site is contributed by Glu367. A helical transmembrane segment spans residues 447-471 (RARAAAAGFEKGIDRDFEPVLSMTP).

This sequence belongs to the PsbB/PsbC family. PsbC subfamily. In terms of assembly, PSII is composed of 1 copy each of membrane proteins PsbA, PsbB, PsbC, PsbD, PsbE, PsbF, PsbH, PsbI, PsbJ, PsbK, PsbL, PsbM, PsbT, PsbX, PsbY, PsbZ, Psb30/Ycf12, at least 3 peripheral proteins of the oxygen-evolving complex and a large number of cofactors. It forms dimeric complexes. It depends on Binds multiple chlorophylls and provides some of the ligands for the Ca-4Mn-5O cluster of the oxygen-evolving complex. It may also provide a ligand for a Cl- that is required for oxygen evolution. PSII binds additional chlorophylls, carotenoids and specific lipids. as a cofactor.

It is found in the plastid. Its subcellular location is the chloroplast thylakoid membrane. In terms of biological role, one of the components of the core complex of photosystem II (PSII). It binds chlorophyll and helps catalyze the primary light-induced photochemical processes of PSII. PSII is a light-driven water:plastoquinone oxidoreductase, using light energy to abstract electrons from H(2)O, generating O(2) and a proton gradient subsequently used for ATP formation. This chain is Photosystem II CP43 reaction center protein, found in Liriodendron tulipifera (Tuliptree).